The following is a 418-amino-acid chain: Trans-acting enoyl reductase (418 aa).

The protein belongs to the saccharopine dehydrogenase family. Enoyl reductase subfamily.

Involved in the reduction of the double bond between C-4 and C-5 during phthiocerol dimycocerosates (DIM A) and glycosylated phenolphthiocerol dimycocerosates (PGL) biosynthesis. This is Trans-acting enoyl reductase from Mycobacterium leprae (strain TN).